Reading from the N-terminus, the 512-residue chain is Maturase K (512 aa).

This sequence belongs to the intron maturase 2 family. MatK subfamily.

It is found in the plastid. It localises to the chloroplast. Usually encoded in the trnK tRNA gene intron. Probably assists in splicing its own and other chloroplast group II introns. This Soldanella alpina (Alpine snowbell) protein is Maturase K.